The following is a 96-amino-acid chain: MTKSELIERLADKARHVPSRDVELAIKEMLEQMAQTLQKGERIEIRGFGSFSLHYRAPRVGRNPKTGETVELDGKHVPHFKPGKELRERVNEDLIA.

The interval 59–86 is disordered; it reads RVGRNPKTGETVELDGKHVPHFKPGKEL. The segment covering 72–86 has biased composition (basic and acidic residues); the sequence is LDGKHVPHFKPGKEL.

Belongs to the bacterial histone-like protein family. As to quaternary structure, heterodimer of an alpha and a beta chain.

This protein is one of the two subunits of integration host factor, a specific DNA-binding protein that functions in genetic recombination as well as in transcriptional and translational control. The protein is Integration host factor subunit beta of Pseudoalteromonas atlantica (strain T6c / ATCC BAA-1087).